Reading from the N-terminus, the 405-residue chain is Probable tRNA sulfurtransferase (405 aa).

Positions 60–165 (TAVMDRLKGV…LNGVFLSGQT (106 aa)) constitute a THUMP domain. ATP contacts are provided by residues 183-184 (ML), 208-209 (HF), Arg-265, Gly-287, and Gln-296.

This sequence belongs to the ThiI family.

It localises to the cytoplasm. The enzyme catalyses [ThiI sulfur-carrier protein]-S-sulfanyl-L-cysteine + a uridine in tRNA + 2 reduced [2Fe-2S]-[ferredoxin] + ATP + H(+) = [ThiI sulfur-carrier protein]-L-cysteine + a 4-thiouridine in tRNA + 2 oxidized [2Fe-2S]-[ferredoxin] + AMP + diphosphate. It catalyses the reaction [ThiS sulfur-carrier protein]-C-terminal Gly-Gly-AMP + S-sulfanyl-L-cysteinyl-[cysteine desulfurase] + AH2 = [ThiS sulfur-carrier protein]-C-terminal-Gly-aminoethanethioate + L-cysteinyl-[cysteine desulfurase] + A + AMP + 2 H(+). It functions in the pathway cofactor biosynthesis; thiamine diphosphate biosynthesis. In terms of biological role, catalyzes the ATP-dependent transfer of a sulfur to tRNA to produce 4-thiouridine in position 8 of tRNAs, which functions as a near-UV photosensor. Also catalyzes the transfer of sulfur to the sulfur carrier protein ThiS, forming ThiS-thiocarboxylate. This is a step in the synthesis of thiazole, in the thiamine biosynthesis pathway. The sulfur is donated as persulfide by IscS. The polypeptide is Probable tRNA sulfurtransferase (Levilactobacillus brevis (strain ATCC 367 / BCRC 12310 / CIP 105137 / JCM 1170 / LMG 11437 / NCIMB 947 / NCTC 947) (Lactobacillus brevis)).